Consider the following 264-residue polypeptide: uncharacterized protein (264 aa).

One can recognise an ABC transporter domain in the interval 3-243; that stretch reads LQLDNVSLKR…QILSAFFDTP (241 aa). 35 to 42 serves as a coordination point for ATP; it reads GLNGAGKT.

The protein belongs to the ABC transporter superfamily.

This is an uncharacterized protein from Bacillus subtilis (strain 168).